Here is a 2465-residue protein sequence, read N- to C-terminus: Highly reducing polyketide synthase milA (2465 aa).

The 434-residue stretch at 1–434 (MEPIAIVGSA…GANCHVILEG (434 aa)) folds into the Ketosynthase family 3 (KS3) domain. Active-site for beta-ketoacyl synthase activity residues include Cys-172, His-311, and His-355. The tract at residues 450 to 476 (KPSLSSSPSLSPTSTSPPTPRTPANSL) is disordered. Residues 451–463 (PSLSSSPSLSPTS) are compositionally biased toward low complexity. Residues 567–888 (VFTGQGAQWA…CGTLSRAVDD (322 aa)) form a malonyl-CoA:ACP transacylase (MAT) domain region. Positions 957 to 1096 (HPLLGVRTNT…GKVQLFVGGD (140 aa)) are N-terminal hotdog fold. The segment at 957–1265 (HPLLGVRTNT…LTVSPVAPVT (309 aa)) is dehydratase (DH) domain. In terms of domain architecture, PKS/mFAS DH spans 957–1267 (HPLLGVRTNT…VSPVAPVTAD (311 aa)). His-989 functions as the Proton acceptor; for dehydratase activity in the catalytic mechanism. Positions 1111–1267 (LNEIDVDTFY…VSPVAPVTAD (157 aa)) are C-terminal hotdog fold. Residue Asp-1174 is the Proton donor; for dehydratase activity of the active site. The tract at residues 1334–1367 (HSTNGLTNGHASTNGHGSTNGHISTNGHSTNGDV) is disordered. Residues 2095–2269 (TYFLVGMAGS…AASVINLTGV (175 aa)) are ketoreductase (KR)domain. One can recognise a Carrier domain in the interval 2384–2459 (DMIFRAFQTV…QVVWSVVHQI (76 aa)). An O-(pantetheine 4'-phosphoryl)serine modification is found at Ser-2419.

Requires pantetheine 4'-phosphate as cofactor.

It carries out the reaction 10 malonyl-CoA + acetyl-CoA + 3 AH2 + 8 NADPH + 18 H(+) = cordypyrone A + 3 A + 10 CO2 + 8 NADP(+) + 11 CoA + 8 H2O. It functions in the pathway secondary metabolite biosynthesis. Highly reducing polyketide synthase (HR-PKS); part of the gene cluster that mediates the biosynthesis of cordypyrones A and B, 2 pyrones that show modest activities against pathogenic bacteria including methicillin-resistant Staphylococcus aureus (MRSA), Mycobacterium tuberculosis and Bacillus cereus. The HR-PKS milA catalyzes the formation of cordypyrones A via condensation of one acetate with 10 malonate units. Since milA lacks an enoyl reductase domain, the 2 beta-keto processing domains DH and KR of milA collaborate with the trans-enoyl reductase milB to catalyze the different levels of reduction. The cytochrome P450 monooxygenase milC then hydroxylates the C-22 of cordypyrones A to yield cordypyrones B. The chain is Highly reducing polyketide synthase milA from Cordyceps militaris (strain CM01) (Caterpillar fungus).